The primary structure comprises 231 residues: Eukaryotic translation initiation factor 4E-1 (231 aa).

EIF4G-binding regions lie at residues 56–59 (HPLE) and 66–102 (FDNS…NNIH). MRNA-binding positions include 74-79 (RQTAWG), lysine 106, and 124-125 (WE). A disulfide bridge links cysteine 129 with cysteine 167. An EIF4G-binding region spans residues 150 to 159 (YTLLAMIGHQ). Residues 174-179 (RAKGEK) and 219-223 (KRLDR) contribute to the mRNA site.

The protein belongs to the eukaryotic initiation factor 4E family. In terms of assembly, EIF4F is a multi-subunit complex, the composition of which varies with external and internal environmental conditions. It is composed of at least EIF4A, EIF4E and EIF4G. EIF4E is also known to interact with other partners. In higher plants two isoforms of EIF4F have been identified, named isoform EIF4F and isoform EIF(iso)4F. Isoform EIF4F has subunits p220 and p26, whereas isoform EIF(iso)4F has subunits p82 and p28. As to quaternary structure, (Microbial infection) Interacts with potyvirus viral genome-linked protein (VPg); this interaction is possible in susceptible hosts but impaired in resistant plants. Post-translationally, according to the redox status, the Cys-129-Cys-167 disulfide bridge may have a role in regulating protein function by affecting its ability to bind capped mRNA.

Its subcellular location is the nucleus. The protein resides in the cytoplasm. Functionally, component of the protein complex eIF4F, which is involved in the recognition of the mRNA cap, ATP-dependent unwinding of 5'-terminal secondary structure and recruitment of mRNA to the ribosome. Recognizes and binds the 7-methylguanosine-containing mRNA cap during an early step in the initiation of protein synthesis and facilitates ribosome binding by inducing the unwinding of the mRNAs secondary structures. Key component of recessive resistance to potyviruses. In terms of biological role, (Microbial infection) Susceptibility host factor required for viral infection (e.g. pepper mottle virus (PepMoV), potato virus Y (PVY) and tobacco etch virus (TEV)) by recruiting viral RNAs to the host ribosomal complex via an interaction with viral genome-linked protein (VPg). The protein is Eukaryotic translation initiation factor 4E-1 of Solanum habrochaites (Wild tomato).